We begin with the raw amino-acid sequence, 819 residues long: DNA topoisomerase 4 subunit A (819 aa).

The region spanning 30 to 496 (LPDIRDGLKP…QIIEIDTASL (467 aa)) is the Topo IIA-type catalytic domain. Tyrosine 118 (O-(5'-phospho-DNA)-tyrosine intermediate) is an active-site residue.

It belongs to the type II topoisomerase GyrA/ParC subunit family. ParC type 2 subfamily. Heterotetramer composed of ParC and ParE.

The protein resides in the cell membrane. It carries out the reaction ATP-dependent breakage, passage and rejoining of double-stranded DNA.. Topoisomerase IV is essential for chromosome segregation. It relaxes supercoiled DNA. Performs the decatenation events required during the replication of a circular DNA molecule. The sequence is that of DNA topoisomerase 4 subunit A from Streptococcus pyogenes serotype M1.